We begin with the raw amino-acid sequence, 556 residues long: MQHKDTAVAKDTAKKRLLRRNSAPSAIHIISRLDKKWSFLWNTIDRHNIVEEQDESSAAKSEEEHEDDYELEQLLNMIRIPMFLEKFMLFALLTSLDCFLYYFTVLPIRLIKGYVKQFKSYRQHYRLQQRSGHKNKIPFRYRITSREYKERCMIFIIVISSILLSKLDTSKLYHRIKRQSTMKLYMLFSVLEMADKMLASLGQSLLTVMLSRKNSERILLHKCLLVSMSLTYVTIHGYVLVYQAISLNIAVNSYSNALLTLLLSMQFAEIKSSVLKKFDKEGFFQITIADVVERFKLTLLLSITGLRNLQSWSSSLSNTSINFWSPRSTLSIVINILCGPMVSVVGSEVLVDWAKHAYITKFNRIRPQIYDKFYYIIYKDYSTRTHKLEDRLGLPLPAFVVLFIVMVRPTLFKSSEPSYLPSLFRILFMGASVFLLALLAKFTLDLILIKWSKRIEQRFRDQAFNTVVTEEEYVPGLLSGGMGKVDVSTRIALHSDYNKENRIETESVSPMRKRKTTLTAECTPPSLNDIRRQKDSKNPRSLENVARYKMVSKRIW.

Residues 1-87 (MQHKDTAVAK…IRIPMFLEKF (87 aa)) are Cytoplasmic-facing. Phosphoserine is present on Ser-22. The helical transmembrane segment at 88-108 (MLFALLTSLDCFLYYFTVLPI) threads the bilayer. At 109 to 151 (RLIKGYVKQFKSYRQHYRLQQRSGHKNKIPFRYRITSREYKER) the chain is on the lumenal side. Residues 152-172 (CMIFIIVISSILLSKLDTSKL) form a helical membrane-spanning segment. Over 173–224 (YHRIKRQSTMKLYMLFSVLEMADKMLASLGQSLLTVMLSRKNSERILLHKCL) the chain is Cytoplasmic. A helical transmembrane segment spans residues 225–245 (LVSMSLTYVTIHGYVLVYQAI). The Lumenal portion of the chain corresponds to 246–330 (SLNIAVNSYS…INFWSPRSTL (85 aa)). Asn-318 is a glycosylation site (N-linked (GlcNAc...) asparagine). A helical transmembrane segment spans residues 331-351 (SIVINILCGPMVSVVGSEVLV). At 352–391 (DWAKHAYITKFNRIRPQIYDKFYYIIYKDYSTRTHKLEDR) the chain is on the cytoplasmic side. Residues 392–412 (LGLPLPAFVVLFIVMVRPTLF) form a helical membrane-spanning segment. At 413-428 (KSSEPSYLPSLFRILF) the chain is on the lumenal side. A helical transmembrane segment spans residues 429–449 (MGASVFLLALLAKFTLDLILI). The Cytoplasmic segment spans residues 450 to 556 (KWSKRIEQRF…RYKMVSKRIW (107 aa)).

This sequence belongs to the TAPT1 family. Interacts with SLP1.

It localises to the endoplasmic reticulum membrane. Its subcellular location is the mitochondrion. Functionally, may be involved in membrane protein folding. This Saccharomyces cerevisiae (strain ATCC 204508 / S288c) (Baker's yeast) protein is Endoplasmic reticulum membrane protein 65.